A 227-amino-acid chain; its full sequence is Esterase OVCA2 (227 aa).

Residues 44–68 (GPHPVPDPPGPEGARSDFGSCPPEE) are disordered. Residues serine 119, aspartate 179, and histidine 206 each act as charge relay system in the active site.

This sequence belongs to the LovG family. Post-translationally, proteolytically degraded in response to RA and 4HPR treatment in a time- and dose-dependent manner in the promyelocytic leukemia cell line HL-60. Ubiquitously expressed.

The enzyme catalyses a carboxylic ester + H2O = an alcohol + a carboxylate + H(+). In terms of biological role, exhibits ester hydrolase activity with a strong preference for long-chain alkyl ester substrates and high selectivity against a variety of short, branched, and substituted esters. Is able to hydrolyze ester bonds within a wide range of p-nitrophenyl derivatives (C2-C14) in vitro, with a strong preference toward substrates of &gt;8 carbons. This Homo sapiens (Human) protein is Esterase OVCA2.